The sequence spans 396 residues: 1-deoxy-D-xylulose 5-phosphate reductoisomerase (396 aa).

NADPH is bound by residues threonine 15, glycine 16, serine 17, isoleucine 18, glycine 41, and asparagine 130. Lysine 131 serves as a coordination point for 1-deoxy-D-xylulose 5-phosphate. Residue glutamate 132 participates in NADPH binding. Aspartate 155 serves as a coordination point for Mn(2+). The 1-deoxy-D-xylulose 5-phosphate site is built by serine 156, glutamate 157, serine 181, and histidine 204. Glutamate 157 is a Mn(2+) binding site. Glycine 210 is a binding site for NADPH. Positions 217, 222, 223, and 226 each coordinate 1-deoxy-D-xylulose 5-phosphate. A Mn(2+)-binding site is contributed by glutamate 226.

It belongs to the DXR family. It depends on Mg(2+) as a cofactor. The cofactor is Mn(2+).

The catalysed reaction is 2-C-methyl-D-erythritol 4-phosphate + NADP(+) = 1-deoxy-D-xylulose 5-phosphate + NADPH + H(+). The protein operates within isoprenoid biosynthesis; isopentenyl diphosphate biosynthesis via DXP pathway; isopentenyl diphosphate from 1-deoxy-D-xylulose 5-phosphate: step 1/6. In terms of biological role, catalyzes the NADPH-dependent rearrangement and reduction of 1-deoxy-D-xylulose-5-phosphate (DXP) to 2-C-methyl-D-erythritol 4-phosphate (MEP). The polypeptide is 1-deoxy-D-xylulose 5-phosphate reductoisomerase (Bifidobacterium longum (strain DJO10A)).